The chain runs to 230 residues: Urease accessory protein UreF (230 aa).

This sequence belongs to the UreF family. In terms of assembly, ureD, UreF and UreG form a complex that acts as a GTP-hydrolysis-dependent molecular chaperone, activating the urease apoprotein by helping to assemble the nickel containing metallocenter of UreC. The UreE protein probably delivers the nickel.

It localises to the cytoplasm. In terms of biological role, required for maturation of urease via the functional incorporation of the urease nickel metallocenter. The protein is Urease accessory protein UreF of Cupriavidus pinatubonensis (strain JMP 134 / LMG 1197) (Cupriavidus necator (strain JMP 134)).